The following is a 137-amino-acid chain: Small ribosomal subunit protein uS11 (137 aa).

A compositionally biased stretch (polar residues) spans 1–11; the sequence is MPPKSRSTGPK. Disordered regions lie at residues 1-28 and 117-137; these read MPPK…PHGA and TISD…RRRV. Basic residues predominate over residues 12 to 21; it reads KTQKARRRDK.

This sequence belongs to the universal ribosomal protein uS11 family. Part of the 30S ribosomal subunit. Interacts with proteins S7 and S18. Binds to IF-3.

Functionally, located on the platform of the 30S subunit, it bridges several disparate RNA helices of the 16S rRNA. Forms part of the Shine-Dalgarno cleft in the 70S ribosome. The chain is Small ribosomal subunit protein uS11 from Rhodococcus opacus (strain B4).